Reading from the N-terminus, the 429-residue chain is Ribosomal RNA small subunit methyltransferase B (429 aa).

Residues 254–260 (CAAPGGK), aspartate 277, aspartate 303, and aspartate 322 each bind S-adenosyl-L-methionine. The Nucleophile role is filled by cysteine 375.

The protein belongs to the class I-like SAM-binding methyltransferase superfamily. RsmB/NOP family.

Its subcellular location is the cytoplasm. It catalyses the reaction cytidine(967) in 16S rRNA + S-adenosyl-L-methionine = 5-methylcytidine(967) in 16S rRNA + S-adenosyl-L-homocysteine + H(+). Specifically methylates the cytosine at position 967 (m5C967) of 16S rRNA. This is Ribosomal RNA small subunit methyltransferase B from Yersinia enterocolitica serotype O:8 / biotype 1B (strain NCTC 13174 / 8081).